The chain runs to 194 residues: Putative manganese efflux pump MntP (194 aa).

6 helical membrane-spanning segments follow: residues 6-26, 35-55, 66-86, 109-129, 142-162, and 174-194; these read LILV…GLAL, WLFA…GLYL, VAAI…LWEA, GVLG…LDAL, VPLT…LGLL, and RAEL…LVGV.

It belongs to the MntP (TC 9.B.29) family.

Its subcellular location is the cell membrane. Functionally, probably functions as a manganese efflux pump. The protein is Putative manganese efflux pump MntP of Moorella thermoacetica (strain ATCC 39073 / JCM 9320).